The sequence spans 422 residues: Exopolygalacturonase clone GBGE184 (422 aa).

The first 31 residues, 1–31, serve as a signal peptide directing secretion; the sequence is MANARSLVAKANNINVGSLILMALVFGSCVA. PbH1 repeat units follow at residues 200 to 226, 227 to 248, 250 to 270, 280 to 301, and 310 to 331; these read TENV…HLSN, ADNV…SVGR, SNNV…SVGS, VSGI…RIKT, and AVDI…IIDQ. N-linked (GlcNAc...) asparagine glycosylation occurs at Asn-229. Asp-241 (proton donor) is an active-site residue. Cysteines 243 and 260 form a disulfide. An N-linked (GlcNAc...) asparagine glycan is attached at Asn-252. His-264 is a catalytic residue. Residue Asn-287 is glycosylated (N-linked (GlcNAc...) asparagine). Intrachain disulfides connect Cys-366-Cys-372 and Cys-404-Cys-420.

Belongs to the glycosyl hydrolase 28 family.

The protein resides in the secreted. Its subcellular location is the cell wall. It catalyses the reaction [(1-&gt;4)-alpha-D-galacturonosyl](n) + H2O = alpha-D-galacturonate + [(1-&gt;4)-alpha-D-galacturonosyl](n-1). Functionally, may function in depolymerizing pectin during pollen development, germination, and tube growth. Acts as an exo-polygalacturonase. This chain is Exopolygalacturonase clone GBGE184 (PGA3), found in Arabidopsis thaliana (Mouse-ear cress).